The chain runs to 282 residues: 2,3,4,5-tetrahydropyridine-2,6-dicarboxylate N-succinyltransferase (282 aa).

Substrate is bound by residues arginine 109 and aspartate 146.

It belongs to the transferase hexapeptide repeat family. As to quaternary structure, homotrimer.

Its subcellular location is the cytoplasm. The enzyme catalyses (S)-2,3,4,5-tetrahydrodipicolinate + succinyl-CoA + H2O = (S)-2-succinylamino-6-oxoheptanedioate + CoA. The protein operates within amino-acid biosynthesis; L-lysine biosynthesis via DAP pathway; LL-2,6-diaminopimelate from (S)-tetrahydrodipicolinate (succinylase route): step 1/3. This Bartonella bacilliformis (strain ATCC 35685 / KC583 / Herrer 020/F12,63) protein is 2,3,4,5-tetrahydropyridine-2,6-dicarboxylate N-succinyltransferase.